Consider the following 387-residue polypeptide: ATP phosphoribosyltransferase regulatory subunit (387 aa).

Belongs to the class-II aminoacyl-tRNA synthetase family. HisZ subfamily. As to quaternary structure, heteromultimer composed of HisG and HisZ subunits.

It localises to the cytoplasm. It functions in the pathway amino-acid biosynthesis; L-histidine biosynthesis; L-histidine from 5-phospho-alpha-D-ribose 1-diphosphate: step 1/9. Required for the first step of histidine biosynthesis. May allow the feedback regulation of ATP phosphoribosyltransferase activity by histidine. This is ATP phosphoribosyltransferase regulatory subunit from Methylobacillus flagellatus (strain ATCC 51484 / DSM 6875 / VKM B-1610 / KT).